Consider the following 3649-residue polypeptide: N-(5-amino-5-carboxypentanoyl)-L-cysteinyl-D-valine synthase (3649 aa).

A domain 1 (adipate-activating) region spans residues 401 to 861; the sequence is SRDRAYVTYT…LAGHLESQGH (461 aa). Carrier domains lie at 783–860, 1859–1936, and 2909–2984; these read APLL…ESQG, APVS…QAAA, and APRD…LSGL. An O-(pantetheine 4'-phosphoryl)serine mark is found at Ser820, Ser1896, and Ser2944. Residues 1014–1937 form a domain 2 (cysteine-activating) region; it reads HHIILDGWSL…QAEHIQAAAL (924 aa). The tract at residues 2079–2985 is domain 3 (valine-activating); that stretch reads HHSCFDGWSW…FVDNVLSGLA (907 aa). Ser3502 acts as the For thioesterase activity in catalysis.

This sequence belongs to the ATP-dependent AMP-binding enzyme family. Requires pantetheine 4'-phosphate as cofactor.

The catalysed reaction is L-2-aminoadipate + L-valine + L-cysteine + 3 ATP + H2O = N-[(5S)-5-amino-5-carboxypentanoyl]-L-cysteinyl-D-valine + 3 AMP + 3 diphosphate + 3 H(+). It participates in antibiotic biosynthesis; penicillin G biosynthesis; penicillin G from L-alpha-aminoadipate and L-cysteine and L-valine: step 1/3. In terms of biological role, each of the constituent amino acids of the tripeptide acv are activated as aminoacyl-adenylates with peptide bonds formed through the participation of amino acid thioester intermediates. The chain is N-(5-amino-5-carboxypentanoyl)-L-cysteinyl-D-valine synthase (pcbAB) from Amycolatopsis lactamdurans (Nocardia lactamdurans).